Consider the following 202-residue polypeptide: Imidazoleglycerol-phosphate dehydratase (202 aa).

The protein belongs to the imidazoleglycerol-phosphate dehydratase family.

It localises to the cytoplasm. The enzyme catalyses D-erythro-1-(imidazol-4-yl)glycerol 3-phosphate = 3-(imidazol-4-yl)-2-oxopropyl phosphate + H2O. Its pathway is amino-acid biosynthesis; L-histidine biosynthesis; L-histidine from 5-phospho-alpha-D-ribose 1-diphosphate: step 6/9. The polypeptide is Imidazoleglycerol-phosphate dehydratase (Chelativorans sp. (strain BNC1)).